The chain runs to 579 residues: Alpha-glucosidase (579 aa).

Asp-212 functions as the Nucleophile in the catalytic mechanism. The active-site Proton donor is Glu-269.

The protein belongs to the glycosyl hydrolase 13 family.

It catalyses the reaction Hydrolysis of terminal, non-reducing (1-&gt;4)-linked alpha-D-glucose residues with release of alpha-D-glucose.. This Schizosaccharomyces pombe (strain 972 / ATCC 24843) (Fission yeast) protein is Alpha-glucosidase (mal1).